Here is a 784-residue protein sequence, read N- to C-terminus: LPS-assembly protein LptD (784 aa).

The N-terminal stretch at 1–24 is a signal peptide; it reads MKKRIPTLLATMIASALYSHQGLA. 2 disulfide bridges follow: C31–C724 and C173–C725.

Belongs to the LptD family. In terms of assembly, component of the lipopolysaccharide transport and assembly complex. Interacts with LptE and LptA. Contains two intramolecular disulfide bonds.

Its subcellular location is the cell outer membrane. In terms of biological role, together with LptE, is involved in the assembly of lipopolysaccharide (LPS) at the surface of the outer membrane. The chain is LPS-assembly protein LptD from Salmonella paratyphi A (strain ATCC 9150 / SARB42).